Consider the following 6874-residue polypeptide: Nesprin-2 (6874 aa).

The actin-binding stretch occupies residues 1 to 286; it reads MAASPVLPTE…MTYVAQFLKY (286 aa). The Cytoplasmic portion of the chain corresponds to 1–6823; that stretch reads MAASPVLPTE…RRSFLSRVIR (6823 aa). Calponin-homology (CH) domains lie at 31 to 136 and 183 to 288; these read DTQK…LHFH and WSAK…KYSK. 4 Spectrin repeats span residues 299 to 380, 381 to 474, 475 to 577, and 578 to 680; these read AKVR…HQVA, AWRA…RINN, VLGK…QYIH, and NTKA…IQDQ. A coiled-coil region spans residues 299 to 6767; it reads AKVRDALVWL…PDASLTSFDE (6469 aa). The interval 675-723 is disordered; that stretch reads VKIQDQPPGNSSGTSLSKESAMAAEPGGSRGEDVKAAEKQEVEDEESAG. Residues 681-692 show a composition bias toward polar residues; it reads PPGNSSGTSLSK. Positions 704–714 are enriched in basic and acidic residues; that stretch reads RGEDVKAAEKQ. Spectrin repeat units follow at residues 727 to 834, 835 to 928, 929 to 1030, 1120 to 1211, 1262 to 1322, 1323 to 1409, 1410 to 1514, 1515 to 1626, 1627 to 1728, 1729 to 1820, 1821 to 1928, 1929 to 2026, 2027 to 2122, 2123 to 2233, 2234 to 2350, 2422 to 2503, 2504 to 2610, 2611 to 2707, 2708 to 2821, 2822 to 2923, 2924 to 3027, 3028 to 3133, 3134 to 3239, 3240 to 3343, 3344 to 3456, 3457 to 3563, 3564 to 3669, 3670 to 3767, 3768 to 3870, 3871 to 3976, and 3977 to 4074; these read VNEE…KNLS, DEPL…LRHE, ISLY…KCAS, TQRG…LLNT, DIRD…DALD, ALEG…QSKE, EGPP…ASVT, ESLE…KTEE, YGEN…AGGS, NSYA…TKKN, ALQD…AGEL, NNSF…EEED, KLPA…LANT, YLSH…SVQK, LEGH…LNSI, DERE…TLKK, TKER…KCFQ, QATE…EALE, PLNR…QLEL, KLEE…FLQN, NGSE…GKIK, QLDT…NMLL, ELQP…SLRA, DVLN…AQEA, EEER…QWGG, ELKR…TTRK, NKDL…SSEV, SKSS…ESRT, SQLN…QIME, ALPH…VTQE, and QNEL…KPSA. The disordered stretch occupies residues 2338–2397; the sequence is SAKQETENGLNSILKSKSSTEKHVKFSLPVEEMPATSEVPKPTRESAAVGESGGARETNT. The span at 2344–2354 shows a compositional bias: polar residues; sequence ENGLNSILKSK. Disordered stretches follow at residues 4062–4152, 4171–4193, 4326–4348, and 4401–4429; these read KQEQ…ATIV, APDS…TDEG, FSED…DQPA, and HQEN…DSTL. Positions 4081-4091 are enriched in basic and acidic residues; that stretch reads VAERDASERKL. Position 4096 is a phosphoserine (S4096). The span at 4110 to 4122 shows a compositional bias: basic and acidic residues; that stretch reads SSVKSEDGRRRTE. The Spectrin 36 repeat unit spans residues 4218–4337; sequence RSRPRPADIL…EDQHPSTLKK (120 aa). Residues 4326–4345 are compositionally biased toward basic and acidic residues; sequence FSEDQHPSTLKKPSEPHDVD. Over residues 4409–4429 the composition is skewed to polar residues; that stretch reads RQSASSSKVPSPGNAASDSTL. Spectrin repeat units lie at residues 4507–4626, 4627–4714, 4715–4823, 4824–4929, 4930–5037, 5038–5150, 5151–5252, 5253–5377, 5378–5473, 5474–5576, 5577–5691, 5692–5786, 5787–5894, 5895–6004, 6005–6122, 6123–6230, and 6231–6342; these read SMTE…RSYQ, NEVK…RARY, LELS…QSML, QKWE…QTLL, KHLL…QEKL, HQLQ…KIQH, LEQL…SQVH, QLRA…KAPH, NAHA…MLLA, KSNE…YSEL, QGNG…QWRF, FTTS…LSLG, EVIS…RVAI, RKQE…VKKL, KETF…EETW, RLWQ…LRYF, and TNQR…PGLD. Positions 5435–5459 are disordered; it reads NSTLSDQLPQPEERSTPGLHSGQRH. The residue at position 5772 (S5772) is a Phosphoserine. The disordered stretch occupies residues 6336 to 6473; sequence SHTPGLDDEK…TEAPVPTDAS (138 aa). Over residues 6341–6354 the composition is skewed to acidic residues; that stretch reads LDDEKEASENETDI. Residues S6348, S6371, S6400, S6417, S6418, S6419, and S6448 each carry the phosphoserine modification. Over residues 6355 to 6372 the composition is skewed to basic and acidic residues; sequence EDPREIQADSWRKRRESE. Spectrin repeat units lie at residues 6450-6534, 6535-6650, and 6651-6767; these read SHSK…KLRL, KQTV…QCQD, and FHQL…SFDE. Positions 6790–6812 are disordered; the sequence is EEEEEEEETDSRMPHLDSPGSSQ. The KASH domain occupies 6815-6874; sequence RSFLSRVIRAALPLQLLLLLLLLLACLLPASEDDYSCTQANNFARSFYPMLRYTNGPPPT. A helical; Anchor for type IV membrane protein membrane pass occupies residues 6824-6844; that stretch reads AALPLQLLLLLLLLLACLLPA. Topologically, residues 6845–6874 are perinuclear space; it reads SEDDYSCTQANNFARSFYPMLRYTNGPPPT. The segment at 6861–6874 is sufficient for interaction with SUN2; sequence FYPMLRYTNGPPPT.

The protein belongs to the nesprin family. As to quaternary structure, core component of LINC complexes which are composed of inner nuclear membrane SUN domain-containing proteins coupled to outer nuclear membrane KASH domain-containing nesprins. SUN and KASH domain-containing proteins seem to bind each other promiscuously; however, some LINC complex constituents are tissue- or cell type-specific. At least SUN1/2-containing core LINC complexes are proposed to be hexameric composed of three protomers of each KASH and SUN domain-containing protein. The SUN2:SYNE2/KASH2 complex is a heterohexamer; the homotrimeric cloverleave-like conformation of the SUN domain is a prerequisite for LINC complex formation in which three separate SYNE2/KASH2 peptides bind at the interface of adjacent SUN domains. Interacts with EMD, LMNA, MKS3 and F-actin via its N-terminal domain. Interacts with DCTN1 and DYNC1I1/2; suggesting the association with the dynein-dynactin motor complex. Associates with kinesin motor complexes. Interacts with TMEM67. Interacts (via KASH domain) with TMEM258. Interacts with BROX; this interaction promotes SYN2 ubiquitination and facilitates the relaxation of mechanical stress imposed by compressive actin fibers at the rupture site. In terms of processing, the disulfid bond with SUN2 is required for stability of the SUN2:SYNE2/KASH2 LINC complex under tensile forces though not required for the interaction. As to expression, C-terminal isoforms are highly expressed in the brain, hert and skeletal muscle. Isoform 1 (Nesprin-2 Giant) is most prevalent in the brain, skin, kidney and skeletal muscle.

It localises to the nucleus outer membrane. Its subcellular location is the sarcoplasmic reticulum membrane. The protein localises to the cell membrane. The protein resides in the cytoplasm. It is found in the cytoskeleton. It localises to the mitochondrion. Its subcellular location is the nucleus. The protein localises to the nucleoplasm. Multi-isomeric modular protein which forms a linking network between organelles and the actin cytoskeleton to maintain the subcellular spatial organization. As a component of the LINC (LInker of Nucleoskeleton and Cytoskeleton) complex involved in the connection between the nuclear lamina and the cytoskeleton. The nucleocytoplasmic interactions established by the LINC complex play an important role in the transmission of mechanical forces across the nuclear envelope and in nuclear movement and positioning. Specifically, SYNE2 and SUN2 assemble in arrays of transmembrane actin-associated nuclear (TAN) lines which are bound to F-actin cables and couple the nucleus to retrograde actin flow during actin-dependent nuclear movement. May be involved in nucleus-centrosome attachment. During interkinetic nuclear migration (INM) at G2 phase and nuclear migration in neural progenitors its LINC complex association with SUN1/2 and probable association with cytoplasmic dynein-dynactin motor complexes functions to pull the nucleus toward the centrosome; SYNE1 and SYNE2 seem to act redundantly in cerebellum, midbrain, brain stem, and other brain regions except cerebral cortex and hippocampus. During INM at G1 phase mediates respective LINC complex association with kinesin to push the nucleus away from the centrosome. Involved in nuclear migration in retinal photoreceptor progenitors. Required for centrosome migration to the apical cell surface during early ciliogenesis. This Mus musculus (Mouse) protein is Nesprin-2.